The sequence spans 500 residues: Aspartyl/glutamyl-tRNA(Asn/Gln) amidotransferase subunit B (500 aa).

The protein belongs to the GatB/GatE family. GatB subfamily. As to quaternary structure, heterotrimer of A, B and C subunits.

The enzyme catalyses L-glutamyl-tRNA(Gln) + L-glutamine + ATP + H2O = L-glutaminyl-tRNA(Gln) + L-glutamate + ADP + phosphate + H(+). The catalysed reaction is L-aspartyl-tRNA(Asn) + L-glutamine + ATP + H2O = L-asparaginyl-tRNA(Asn) + L-glutamate + ADP + phosphate + 2 H(+). Functionally, allows the formation of correctly charged Asn-tRNA(Asn) or Gln-tRNA(Gln) through the transamidation of misacylated Asp-tRNA(Asn) or Glu-tRNA(Gln) in organisms which lack either or both of asparaginyl-tRNA or glutaminyl-tRNA synthetases. The reaction takes place in the presence of glutamine and ATP through an activated phospho-Asp-tRNA(Asn) or phospho-Glu-tRNA(Gln). The chain is Aspartyl/glutamyl-tRNA(Asn/Gln) amidotransferase subunit B from Rhizobium etli (strain CIAT 652).